The following is a 604-amino-acid chain: Putative ankyrin repeat protein L56 (604 aa).

ANK repeat units follow at residues 77–106 (IDRY…DILV), 135–164 (FFKS…NADG), 166–189 (LSAC…YDDN), 190–219 (TIYH…EDKR), 221–247 (NVFI…KWKI), 248–277 (DVEF…DSKY), 314–341 (KFSK…NENV), 342–371 (DLRE…EFTD), 380–410 (EHIT…SRSY), 445–474 (YSQA…DIKP), 475–504 (ITNI…DITI), 505–534 (NDNR…DIRT), and 535–565 (DDDY…EPSN).

This Acanthamoeba polyphaga (Amoeba) protein is Putative ankyrin repeat protein L56.